A 460-amino-acid polypeptide reads, in one-letter code: MIKGSSLKRIKSLVMMAIFSVSIITTAIVSSAADQIPFPYNATYPYGAYSCLADSQSSANNLLKSEWEQWKSAHITSNGARGYKRVQRDASTNYDTVSEGLGYGMLLAVYFGEQQLFDDLYRYVKVFLNSNGLMSWRIDANGNIMGQNAIGAATDADEDIAVSLVFAHKKWGTSGGFNYQTEAKNYINNIYNKMVEPGTYVLKPGDMWGGSDVTNPSYFAPAWYRIFADFTGNSGWINVANKCYEIADKARNSNTGLVPDWCTANGTPASGQGYDFYYDAIRYQWRTAIDYSWYGTAKAKTHCDAISNFFKNIGYPNIKDGYTLSGSQISANHTATFVSCAAAAAMTGTDATYAKNIYNECVKVKDTGNYTYFGNTLRMMILLYTTGNFPNLYSYSSQPQQGLKGDVNNDGAIDALDIAALKKAILTQSTSNINLTNADMNNDGNIDAIDFAQLKVKLLN.

Residues 1–32 (MIKGSSLKRIKSLVMMAIFSVSIITTAIVSSA) form the signal peptide. Glutamate 99 acts as the Proton donor in catalysis. Aspartate 155 serves as the catalytic Nucleophile. A Dockerin domain is found at 400-460 (QQGLKGDVNN…FAQLKVKLLN (61 aa)).

Belongs to the glycosyl hydrolase 8 (cellulase D) family.

The enzyme catalyses Endohydrolysis of (1-&gt;4)-beta-D-glucosidic linkages in cellulose, lichenin and cereal beta-D-glucans.. The protein is Endoglucanase 2 (celB) of Ruminiclostridium josui (Clostridium josui).